The chain runs to 153 residues: Nucleoside diphosphate kinase 3 (153 aa).

Residues Lys-11, Phe-59, Arg-87, Thr-93, Arg-104, and Asn-114 each contribute to the ATP site. His-117 (pros-phosphohistidine intermediate) is an active-site residue.

The protein belongs to the NDK family. As to quaternary structure, homohexamer. Mg(2+) is required as a cofactor.

Its subcellular location is the plastid. It is found in the chloroplast thylakoid lumen. It carries out the reaction a 2'-deoxyribonucleoside 5'-diphosphate + ATP = a 2'-deoxyribonucleoside 5'-triphosphate + ADP. It catalyses the reaction a ribonucleoside 5'-diphosphate + ATP = a ribonucleoside 5'-triphosphate + ADP. Functionally, major role in the synthesis of nucleoside triphosphates other than ATP. The ATP gamma phosphate is transferred to the NDP beta phosphate via a ping-pong mechanism, using a phosphorylated active-site intermediate. Shows the highest specificity towards GDP. The polypeptide is Nucleoside diphosphate kinase 3 (Spinacia oleracea (Spinach)).